The sequence spans 158 residues: Cathelicidin-6 (158 aa).

Residues 1 to 29 (METQRASLSLGRWSLWLLLLGLALPSASA) form the signal peptide. A propeptide spanning residues 30–131 (QALSYREAVL…NVTCEELQSV (102 aa)) is cleaved from the precursor. 2 disulfides stabilise this stretch: Cys86-Cys97 and Cys108-Cys125.

It belongs to the cathelicidin family.

It is found in the secreted. In terms of biological role, exerts a potent antimicrobial activity against Gram-negative and Gram-positive bacteria, including methicillin-resistant Staphylococcus aureus, and fungi. The protein is Cathelicidin-6 (CATHL6) of Bos taurus (Bovine).